We begin with the raw amino-acid sequence, 382 residues long: D-galactonate dehydratase (382 aa).

Aspartate 183 contributes to the Mg(2+) binding site. The Proton donor role is filled by histidine 185. Mg(2+)-binding residues include glutamate 209 and glutamate 235. Histidine 285 acts as the Proton acceptor in catalysis. The disordered stretch occupies residues asparagine 361 to tryptophan 382.

Belongs to the mandelate racemase/muconate lactonizing enzyme family. GalD subfamily. The cofactor is Mg(2+).

The enzyme catalyses D-galactonate = 2-dehydro-3-deoxy-D-galactonate + H2O. The protein operates within carbohydrate acid metabolism; D-galactonate degradation; D-glyceraldehyde 3-phosphate and pyruvate from D-galactonate: step 1/3. Functionally, catalyzes the dehydration of D-galactonate to 2-keto-3-deoxy-D-galactonate. The polypeptide is D-galactonate dehydratase (Xanthomonas axonopodis pv. citri (strain 306)).